Here is a 304-residue protein sequence, read N- to C-terminus: Small glutamine-rich tetratricopeptide repeat-containing protein beta (304 aa).

TPR repeat units lie at residues 15–49 (LREQ…SPED), 85–118 (ADQL…DPNN), 120–152 (VYYC…DSKY), and 153–186 (SKAY…DPEN). K131 carries the N6-acetyllysine modification. Phosphoserine is present on residues S293, S295, and S297.

This sequence belongs to the SGT family. As to quaternary structure, homooligomerize. As to expression, expressed specifically in brain.

In terms of biological role, co-chaperone that binds directly to HSC70 and HSP70 and regulates their ATPase activity. The sequence is that of Small glutamine-rich tetratricopeptide repeat-containing protein beta (Sgtb) from Rattus norvegicus (Rat).